A 93-amino-acid polypeptide reads, in one-letter code: Large ribosomal subunit protein bL27 (93 aa).

Residues M1 to F10 constitute a propeptide that is removed on maturation.

It belongs to the bacterial ribosomal protein bL27 family. In terms of processing, the N-terminus is cleaved by ribosomal processing cysteine protease Prp.

In Phytoplasma australiense, this protein is Large ribosomal subunit protein bL27.